Consider the following 474-residue polypeptide: Bifunctional protein HldE (474 aa).

The segment at 1-321 (MILSSSLRPT…EYLHSSHQGE (321 aa)) is ribokinase. 198-201 (NKKE) lines the ATP pocket. Residue D266 is part of the active site. Positions 348–474 (FTNGCFDILH…SAVVKKIQGS (127 aa)) are cytidylyltransferase.

It in the N-terminal section; belongs to the carbohydrate kinase PfkB family. This sequence in the C-terminal section; belongs to the cytidylyltransferase family. In terms of assembly, homodimer.

It carries out the reaction D-glycero-beta-D-manno-heptose 7-phosphate + ATP = D-glycero-beta-D-manno-heptose 1,7-bisphosphate + ADP + H(+). It catalyses the reaction D-glycero-beta-D-manno-heptose 1-phosphate + ATP + H(+) = ADP-D-glycero-beta-D-manno-heptose + diphosphate. It functions in the pathway nucleotide-sugar biosynthesis; ADP-L-glycero-beta-D-manno-heptose biosynthesis; ADP-L-glycero-beta-D-manno-heptose from D-glycero-beta-D-manno-heptose 7-phosphate: step 1/4. It participates in nucleotide-sugar biosynthesis; ADP-L-glycero-beta-D-manno-heptose biosynthesis; ADP-L-glycero-beta-D-manno-heptose from D-glycero-beta-D-manno-heptose 7-phosphate: step 3/4. Catalyzes the phosphorylation of D-glycero-D-manno-heptose 7-phosphate at the C-1 position to selectively form D-glycero-beta-D-manno-heptose-1,7-bisphosphate. In terms of biological role, catalyzes the ADP transfer from ATP to D-glycero-beta-D-manno-heptose 1-phosphate, yielding ADP-D-glycero-beta-D-manno-heptose. The chain is Bifunctional protein HldE from Wolinella succinogenes (strain ATCC 29543 / DSM 1740 / CCUG 13145 / JCM 31913 / LMG 7466 / NCTC 11488 / FDC 602W) (Vibrio succinogenes).